The primary structure comprises 261 residues: Large ribosomal subunit protein uL2 (261 aa).

The interval 207–233 (VEHPHGGGNHQHIGKASTVKRGTPPGR) is disordered.

The protein belongs to the universal ribosomal protein uL2 family.

It localises to the cytoplasm. The polypeptide is Large ribosomal subunit protein uL2 (RpL8) (Aedes albopictus (Asian tiger mosquito)).